Reading from the N-terminus, the 416-residue chain is Beta sliding clamp (416 aa).

Belongs to the beta sliding clamp family. In terms of assembly, forms a ring-shaped head-to-tail homodimer around DNA which binds and tethers DNA polymerases and other proteins to the DNA. The DNA replisome complex has a single clamp-loading complex (3 tau and 1 each of delta, delta', psi and chi subunits) which binds 3 Pol III cores (1 core on the leading strand and 2 on the lagging strand) each with a beta sliding clamp dimer. Additional proteins in the replisome are other copies of gamma, psi and chi, Ssb, DNA helicase and RNA primase.

It is found in the cytoplasm. Confers DNA tethering and processivity to DNA polymerases and other proteins. Acts as a clamp, forming a ring around DNA (a reaction catalyzed by the clamp-loading complex) which diffuses in an ATP-independent manner freely and bidirectionally along dsDNA. Initially characterized for its ability to contact the catalytic subunit of DNA polymerase III (Pol III), a complex, multichain enzyme responsible for most of the replicative synthesis in bacteria; Pol III exhibits 3'-5' exonuclease proofreading activity. The beta chain is required for initiation of replication as well as for processivity of DNA replication. This chain is Beta sliding clamp (dnaN), found in Chlamydia trachomatis serovar D (strain ATCC VR-885 / DSM 19411 / UW-3/Cx).